We begin with the raw amino-acid sequence, 690 residues long: MSSKGDLSRCRNIGIMAHIDAGKTTTTERILFYTGKQNRIGEVHEGAASMDWMEQERERGITITSAATTCFWNDCRINIIDTPGHVDFTIEVERSLRVLDGAVAVFDGVAGVEPQSETVWRQADKYDVPRICFVNKMDRIGADFYACVDMIKDRLGAVPLVLQLPIGVDKSFVGVVDLVEMRSITWEEDSLGAKFNYGEIPSDLMEKAQDYRARLIESAVEMNDEAMNLYLDGGEISVPLLKSCIRSGVIGAKFVPVLCGSAFKNKGVQPLLDAVVDFLPSPSDIPTIEGASASDPQKAVTIKSSVDDKFVALAFKVMVDRFVGSLTFIRVYSGKLTGKSVVLNSAKGVTESVGRILRMHANNREDISEIQAGDIAALAGLKKTTTGDTLCDQNFPVVLEKMDFPESVMEIAVEPVSTADQEKMGTALSRLVAEDPSLKVCVNSESGQTILKGMGELHLEIIVDRMKREFGVEASVGAPQVAYRETITKSAEIEYVHKKQTGGAGQFAKVNILFEPLPPGSGFEFENKITCGAIPKEYIPGVQSGLELVKETGMIAGFPVIDFKATLFDGAFHEVDSSPLAFELAAKGAFREMANKAGPVLLEPIMRVEIITPDEYMGDVIGDVNSRRGRVAEMQDRHNAKLITAFIPLGKMFGYVKDLRSMSQGRAQYSMYFARYERVPENAVDNVMKK.

Residues 8-283 (SRCRNIGIMA…AVVDFLPSPS (276 aa)) form the tr-type G domain. GTP is bound by residues 17 to 24 (AHIDAGKT), 81 to 85 (DTPGH), and 135 to 138 (NKMD).

It belongs to the TRAFAC class translation factor GTPase superfamily. Classic translation factor GTPase family. EF-G/EF-2 subfamily.

Its subcellular location is the cytoplasm. Its function is as follows. Catalyzes the GTP-dependent ribosomal translocation step during translation elongation. During this step, the ribosome changes from the pre-translocational (PRE) to the post-translocational (POST) state as the newly formed A-site-bound peptidyl-tRNA and P-site-bound deacylated tRNA move to the P and E sites, respectively. Catalyzes the coordinated movement of the two tRNA molecules, the mRNA and conformational changes in the ribosome. This chain is Elongation factor G, found in Anaplasma marginale (strain St. Maries).